The primary structure comprises 617 residues: E3 ubiquitin-protein ligase ORTHRUS 1 (617 aa).

The PHD-type zinc-finger motif lies at 12–62 (DGVCMRCQVNPPSEETLTCGTCVTPWHVPCLLPESLASSTGEWECPDCSGV). Residues 129-169 (CSICIQLPERPITTPCGHNFCLKCFEKWAVGQGKLTCMICR) form an RING-type 1 zinc finger. Residues 258–407 (TRKQGVLVGE…FKVCRYLFVR (150 aa)) enclose the YDG domain. The RING-type 2 zinc finger occupies 495 to 552 (CQICREVLSLPVTTPCAHNFCKACLEAKFAGITQLRERSNGGRKLRAKKNIMTCPCCT). A coiled-coil region spans residues 563 to 593 (QVNREMMEIIENFKKSEEEADASISEEEEEE). The tract at residues 575-617 (FKKSEEEADASISEEEEEESEPPTKKIKMDNNSVGGSGTSLSA) is disordered. Residues 580–595 (EEADASISEEEEEESE) show a composition bias toward acidic residues. Over residues 604–617 (DNNSVGGSGTSLSA) the composition is skewed to polar residues.

Expressed in inflorescences and leaves.

The protein resides in the nucleus. The enzyme catalyses S-ubiquitinyl-[E2 ubiquitin-conjugating enzyme]-L-cysteine + [acceptor protein]-L-lysine = [E2 ubiquitin-conjugating enzyme]-L-cysteine + N(6)-ubiquitinyl-[acceptor protein]-L-lysine.. It participates in protein modification; protein ubiquitination. E3 ubiquitin-protein ligase. Participates in CpG methylation-dependent transcriptional regulation and epigenetic transcriptional silencing. Mediates ubiquitination with the E2 ubiquitin-conjugating enzymes UBC11, UBC8 and UBC8 homologs (e.g. UBC10, UBC11, UBC28 and UBC29) but not with UBC27, UBC30, UBC32, UBC34 and UBC36. Promotes methylation-mediated gene silencing leading, for example, to early flowering. Can bind to CpG, CpNpG, and CpNpN DNA motifs, with a strong preference for methylated forms, and with highest affinity for CpG substrate. This chain is E3 ubiquitin-protein ligase ORTHRUS 1 (ORTH1), found in Arabidopsis thaliana (Mouse-ear cress).